Here is a 596-residue protein sequence, read N- to C-terminus: SUN domain-containing protein 4 (596 aa).

Residues 28-48 (VSLSLVFLIWGLVFLSTLWIS) form a helical membrane-spanning segment. Disordered stretches follow at residues 58 to 98 (LVDS…LSSD) and 139 to 158 (KQSEINNNTVPGNDTETTGS). The span at 66–77 (EPDDERADETAE) shows a compositional bias: acidic residues. Composition is skewed to polar residues over residues 80–95 (DATSLESTSVHSNPGL) and 141–158 (SEINNNTVPGNDTETTGS). Residues 179-343 (SNSRDKSLSG…SLLEVYGVDA (165 aa)) form the SUN domain. The segment covering 366-396 (DTEQKEKKTMQAKESFESDEDKSKQKEKEQE) has biased composition (basic and acidic residues). The tract at residues 366–410 (DTEQKEKKTMQAKESFESDEDKSKQKEKEQEASPENAVVKDEVSL) is disordered. Residues 475–544 (ASKREKEVET…LERLEWMEKK (70 aa)) adopt a coiled-coil conformation. A run of 2 helical transmembrane segments spans residues 545–565 (GVVVFTICVGFGTIAVVAVVF) and 576–596 (GGLAWLLLLISSTFVMFILSL).

Forms homomers and heteromers with SUN3. Interacts with SUN1, SUN2 and TIK.

It localises to the nucleus membrane. Its subcellular location is the endoplasmic reticulum membrane. Encodes a member of the mid-SUN subfamily of SUN-domain proteins that is localized to both the nuclear envelope and the ER. It is involved in early seed development and nuclear morphology. [TAIR]. The sequence is that of SUN domain-containing protein 4 from Arabidopsis thaliana (Mouse-ear cress).